Reading from the N-terminus, the 271-residue chain is Elongation factor Ts (271 aa).

An involved in Mg(2+) ion dislocation from EF-Tu region spans residues 76–79 (TDFV).

Belongs to the EF-Ts family.

Its subcellular location is the cytoplasm. Its function is as follows. Associates with the EF-Tu.GDP complex and induces the exchange of GDP to GTP. It remains bound to the aminoacyl-tRNA.EF-Tu.GTP complex up to the GTP hydrolysis stage on the ribosome. The protein is Elongation factor Ts of Mycobacterium tuberculosis (strain ATCC 25177 / H37Ra).